Here is a 509-residue protein sequence, read N- to C-terminus: Bifunctional purine biosynthesis protein PurH (509 aa).

Residues 1 to 145 form the MGS-like domain; that stretch reads MIKRALISVF…KSFKDVVVIS (145 aa).

The protein belongs to the PurH family.

The enzyme catalyses (6R)-10-formyltetrahydrofolate + 5-amino-1-(5-phospho-beta-D-ribosyl)imidazole-4-carboxamide = 5-formamido-1-(5-phospho-D-ribosyl)imidazole-4-carboxamide + (6S)-5,6,7,8-tetrahydrofolate. The catalysed reaction is IMP + H2O = 5-formamido-1-(5-phospho-D-ribosyl)imidazole-4-carboxamide. It functions in the pathway purine metabolism; IMP biosynthesis via de novo pathway; 5-formamido-1-(5-phospho-D-ribosyl)imidazole-4-carboxamide from 5-amino-1-(5-phospho-D-ribosyl)imidazole-4-carboxamide (10-formyl THF route): step 1/1. The protein operates within purine metabolism; IMP biosynthesis via de novo pathway; IMP from 5-formamido-1-(5-phospho-D-ribosyl)imidazole-4-carboxamide: step 1/1. The polypeptide is Bifunctional purine biosynthesis protein PurH (Brachyspira hyodysenteriae (strain ATCC 49526 / WA1)).